Consider the following 109-residue polypeptide: Flagellar hook-basal body complex protein FliE (109 aa).

It belongs to the FliE family.

It is found in the bacterial flagellum basal body. In Pseudomonas savastanoi pv. phaseolicola (strain 1448A / Race 6) (Pseudomonas syringae pv. phaseolicola (strain 1448A / Race 6)), this protein is Flagellar hook-basal body complex protein FliE.